The chain runs to 72 residues: Large ribosomal subunit protein bL31 (72 aa).

Belongs to the bacterial ribosomal protein bL31 family. Type A subfamily. In terms of assembly, part of the 50S ribosomal subunit.

Its function is as follows. Binds the 23S rRNA. This is Large ribosomal subunit protein bL31 from Prosthecochloris aestuarii (strain DSM 271 / SK 413).